The sequence spans 333 residues: GTP 3',8-cyclase (333 aa).

In terms of domain architecture, Radical SAM core spans Lys7–Glu221. GTP is bound at residue Arg16. Positions 23 and 27 each coordinate [4Fe-4S] cluster. Tyr29 provides a ligand contact to S-adenosyl-L-methionine. [4Fe-4S] cluster is bound at residue Cys30. Arg66 provides a ligand contact to GTP. Position 70 (Gly70) interacts with S-adenosyl-L-methionine. Thr97 contributes to the GTP binding site. An S-adenosyl-L-methionine-binding site is contributed by Ser121. Residue Lys158 coordinates GTP. Met192 lines the S-adenosyl-L-methionine pocket. The [4Fe-4S] cluster site is built by Cys257 and Cys260. A GTP-binding site is contributed by Arg262–Arg264. Cys274 serves as a coordination point for [4Fe-4S] cluster.

It belongs to the radical SAM superfamily. MoaA family. As to quaternary structure, monomer and homodimer. [4Fe-4S] cluster is required as a cofactor.

It carries out the reaction GTP + AH2 + S-adenosyl-L-methionine = (8S)-3',8-cyclo-7,8-dihydroguanosine 5'-triphosphate + 5'-deoxyadenosine + L-methionine + A + H(+). It functions in the pathway cofactor biosynthesis; molybdopterin biosynthesis. In terms of biological role, catalyzes the cyclization of GTP to (8S)-3',8-cyclo-7,8-dihydroguanosine 5'-triphosphate. This is GTP 3',8-cyclase from Listeria monocytogenes serovar 1/2a (strain ATCC BAA-679 / EGD-e).